The primary structure comprises 337 residues: Putative olfactory receptor 1F12P (337 aa).

Topologically, residues 1–25 (MEGKNQTNISEFLLLGFSSWQQQQV) are extracellular. Residues Asn-5 and Asn-8 are each glycosylated (N-linked (GlcNAc...) asparagine). The helical transmembrane segment at 26–49 (LLFALFLCLYLTGLFGNLLILLAI) threads the bilayer. Residues 50–57 (GSDHCLHT) lie on the Cytoplasmic side of the membrane. A helical membrane pass occupies residues 58-79 (PMYFFLANLSLVDLCLPSATVP). The Extracellular segment spans residues 80-100 (KMLLNIQTQTQTISYPGCLAQ). An intrachain disulfide couples Cys-97 to Cys-189. Residues 101 to 120 (MYFCMMFANMDNFLLTVMAY) form a helical membrane-spanning segment. Over 121 to 139 (DRYVAICHPLHYSTIMALR) the chain is Cytoplasmic. The chain crosses the membrane as a helical span at residues 140–158 (LCASLVAAPWVIAILNPLL). Over 159–196 (HTLMMAHLHFCSDNVIHHFFCDINSLLPLSCSDTSLNQ) the chain is Extracellular. A helical membrane pass occupies residues 197–219 (LSVLATVGLIFVVPSVCILVSYI). The Cytoplasmic segment spans residues 220-236 (LIVSAVMKVPSAQGKLK). The chain crosses the membrane as a helical span at residues 237–259 (AFSTCGSHLALVILFYGAITGVY). The Extracellular segment spans residues 260–272 (MSPLSNHSTEKDS). A glycan (N-linked (GlcNAc...) asparagine) is linked at Asn-265. Residues 273 to 292 (AASVIFMVVAPVLNPFIYSL) form a helical membrane-spanning segment. Topologically, residues 293-337 (RNNELKGTLKKTLSRPGAVAHACNPSTLGGRGGWIMRSGDRDHPG) are cytoplasmic.

It belongs to the G-protein coupled receptor 1 family.

Its subcellular location is the cell membrane. Functionally, odorant receptor. The polypeptide is Putative olfactory receptor 1F12P (Homo sapiens (Human)).